Here is a 146-residue protein sequence, read N- to C-terminus: ATP synthase F(0) complex subunit C2, mitochondrial (146 aa).

The N-terminal 71 residues, 1–71 (MYACSKFVST…RSFQTSAISR (71 aa)), are a transit peptide targeting the mitochondrion. The helical transmembrane segment at 87–107 (VGVAGSGAGIGTVFGSLIIGY) threads the bilayer. Lys-114 carries the post-translational modification N6,N6,N6-trimethyllysine. Residues 122–142 (ILGFALSEAMGLFCLMVAFLI) traverse the membrane as a helical segment.

The protein belongs to the ATPase C chain family. As to quaternary structure, F-type ATPases have 2 components, CF(1) - the catalytic core - and CF(0) - the membrane proton channel. CF(1) has five subunits: alpha(3), beta(3), gamma(1), delta(1), epsilon(1). CF(0) has three main subunits: a, b and c. Interacts with DNAJC30; interaction is direct. In terms of processing, trimethylated by ATPSCKMT at Lys-114. Methylation is required for proper incorporation of the C subunit into the ATP synthase complex and mitochondrial respiration.

It localises to the mitochondrion membrane. Its function is as follows. Mitochondrial membrane ATP synthase (F(1)F(0) ATP synthase or Complex V) produces ATP from ADP in the presence of a proton gradient across the membrane which is generated by electron transport complexes of the respiratory chain. F-type ATPases consist of two structural domains, F(1) - containing the extramembraneous catalytic core and F(0) - containing the membrane proton channel, linked together by a central stalk and a peripheral stalk. During catalysis, ATP synthesis in the catalytic domain of F(1) is coupled via a rotary mechanism of the central stalk subunits to proton translocation. Part of the complex F(0) domain. A homomeric c-ring of probably 10 subunits is part of the complex rotary element. This chain is ATP synthase F(0) complex subunit C2, mitochondrial, found in Mus musculus (Mouse).